Reading from the N-terminus, the 292-residue chain is 2-(5''-triphosphoribosyl)-3'-dephosphocoenzyme-A synthase (292 aa).

It belongs to the CitG/MdcB family.

It carries out the reaction 3'-dephospho-CoA + ATP = 2'-(5''-triphospho-alpha-D-ribosyl)-3'-dephospho-CoA + adenine. Functionally, catalyzes the formation of 2-(5''-triphosphoribosyl)-3'-dephosphocoenzyme-A, the precursor of the prosthetic group of the holo-acyl carrier protein (gamma chain) of citrate lyase, from ATP and dephospho-CoA. This chain is 2-(5''-triphosphoribosyl)-3'-dephosphocoenzyme-A synthase, found in Escherichia coli O7:K1 (strain IAI39 / ExPEC).